A 445-amino-acid chain; its full sequence is MLETSQTIPELVSWAKEREFSLNLPTERLAFLLAIAIYNAERFDGEMVESDLVDIFRHVSNEFEQSKETIATRANNAINELVKQRFLNRFSSEFTESLSIYRLTPLGVGVSDYYIRQREFSALRLSVQLAIVANEIQRASELAEEGTAKQEDEYYWRRNVFAPLKYSVAEIFDSIDLSQRIMDENQQSIKEEIAELLTKDWQAAIASCERLLDETSGNLRELQDTLNAAGDKLQEQLLRIQDCVIGRDDLYFIDQLITDLQAKLDRIISWGQQAIDLWIGYDRHVHKFIRTAIDMDKNRVFSQRLRQSIHNYFDMPWYLWTAQAERLIDLRDEELALRDEDALGELPEELEYEQLSDLHDQIVDYMQNLLIAQRERNQPIDLSLVLKEQLEGYPLARHFDVARIIVDQAVRLGMASADLSGTYPQWQEINNRGAEVQAHVIDEYK.

The leucine-zipper stretch occupies residues leucine 212–isoleucine 240.

This sequence belongs to the MukF family. As to quaternary structure, interacts, and probably forms a ternary complex, with MukE and MukB via its C-terminal region. The complex formation is stimulated by calcium or magnesium. It is required for an interaction between MukE and MukB.

It is found in the cytoplasm. It localises to the nucleoid. Involved in chromosome condensation, segregation and cell cycle progression. May participate in facilitating chromosome segregation by condensation DNA from both sides of a centrally located replisome during cell division. Not required for mini-F plasmid partitioning. Probably acts via its interaction with MukB and MukE. Overexpression results in anucleate cells. It has a calcium binding activity. This chain is Chromosome partition protein MukF, found in Mannheimia succiniciproducens (strain KCTC 0769BP / MBEL55E).